A 306-amino-acid chain; its full sequence is Glutaminase (306 aa).

S64, N115, E159, N166, Y190, Y242, and V260 together coordinate substrate.

Belongs to the glutaminase family. Homotetramer.

The catalysed reaction is L-glutamine + H2O = L-glutamate + NH4(+). The sequence is that of Glutaminase from Vibrio parahaemolyticus serotype O3:K6 (strain RIMD 2210633).